The following is a 43-amino-acid chain: Kappa-actitoxin-Avd4p (43 aa).

3 cysteine pairs are disulfide-bonded: Cys4-Cys39, Cys6-Cys32, and Cys22-Cys40.

It is found in the secreted. The protein resides in the nematocyst. Functionally, blocks Kv3 voltage-gated potassium channels. Reduces blood pressure. The protein is Kappa-actitoxin-Avd4p of Anemonia viridis (Snakelocks anemone).